The following is a 249-amino-acid chain: Probable septum site-determining protein MinC (249 aa).

The disordered stretch occupies residues 89-130; sequence SLFEPGMPPAMKGGRPAPDFEVPEVDPADPPKAGKGKAAAPI. Over residues 119–129 the composition is skewed to low complexity; that stretch reads PKAGKGKAAAP.

The protein belongs to the MinC family. In terms of assembly, interacts with MinD and FtsZ.

Functionally, cell division inhibitor that blocks the formation of polar Z ring septums. Rapidly oscillates between the poles of the cell to destabilize FtsZ filaments that have formed before they mature into polar Z rings. Prevents FtsZ polymerization. This chain is Probable septum site-determining protein MinC, found in Rhizobium meliloti (strain 1021) (Ensifer meliloti).